We begin with the raw amino-acid sequence, 170 residues long: Ribosome maturation factor RimM (170 aa).

A PRC barrel domain is found at Glu96 to Leu169.

It belongs to the RimM family. In terms of assembly, binds ribosomal protein uS19.

The protein localises to the cytoplasm. Functionally, an accessory protein needed during the final step in the assembly of 30S ribosomal subunit, possibly for assembly of the head region. Essential for efficient processing of 16S rRNA. May be needed both before and after RbfA during the maturation of 16S rRNA. It has affinity for free ribosomal 30S subunits but not for 70S ribosomes. The protein is Ribosome maturation factor RimM of Sorangium cellulosum (strain So ce56) (Polyangium cellulosum (strain So ce56)).